Reading from the N-terminus, the 119-residue chain is Large ribosomal subunit protein uL22 (119 aa).

Belongs to the universal ribosomal protein uL22 family. As to quaternary structure, part of the 50S ribosomal subunit.

This protein binds specifically to 23S rRNA; its binding is stimulated by other ribosomal proteins, e.g. L4, L17, and L20. It is important during the early stages of 50S assembly. It makes multiple contacts with different domains of the 23S rRNA in the assembled 50S subunit and ribosome. Functionally, the globular domain of the protein is located near the polypeptide exit tunnel on the outside of the subunit, while an extended beta-hairpin is found that lines the wall of the exit tunnel in the center of the 70S ribosome. This is Large ribosomal subunit protein uL22 from Trichodesmium erythraeum (strain IMS101).